A 420-amino-acid chain; its full sequence is Protein disulfide isomerase Creld1 (420 aa).

Positions 1–29 are cleaved as a signal peptide; sequence MAPQPLRGLVPFLLWCLSLFLSLPGPVWL. Over 30 to 362 the chain is Extracellular; it reads QPSPPPHSAP…GFFAEMTEDE (333 aa). The CXXC signature appears at 46-49; that stretch reads CHTC. Cystine bridges form between cysteine 46/cysteine 49, cysteine 155/cysteine 169, cysteine 163/cysteine 181, and cysteine 183/cysteine 192. One can recognise an EGF-like 1 domain in the interval 153 to 193; that stretch reads LPCPGGTERPCGGYGQCEGEGTRGGSGHCDCQAGYGGEACG. N-linked (GlcNAc...) asparagine glycosylation occurs at asparagine 205. FU repeat units follow at residues 208 to 255 and 268 to 315; these read HLVC…EQAT and SYEC…VVCP. Positions 278-281 match the CXXC motif; it reads CLGC. Cystine bridges form between cysteine 278-cysteine 281, cysteine 309-cysteine 321, cysteine 314-cysteine 330, and cysteine 332-cysteine 343. Residues 305-342 form the EGF-like 2; calcium-binding domain; sequence DVDECETVVCPGENEQCENTEGSYRCVCAEGFRQEDGI. Residues 363-383 traverse the membrane as a helical segment; that stretch reads MVVLQQMFFGVIICALATLAA. Position 384 (lysine 384) is a topological domain, cytoplasmic. Residues 385 to 405 form a helical membrane-spanning segment; the sequence is GDLVFTAIFIGAVAAMTGYWL. Residues 406-420 are Extracellular-facing; sequence SERSDRVLEGFIKGR.

It belongs to the CRELD family.

Its subcellular location is the membrane. The catalysed reaction is Catalyzes the rearrangement of -S-S- bonds in proteins.. Protein disulfide isomerase. Promotes the localization of acetylcholine receptors (AChRs) to the plasma membrane. In Rattus norvegicus (Rat), this protein is Protein disulfide isomerase Creld1 (Creld1).